The following is a 397-amino-acid chain: N-acetyllactosaminide beta-1,3-N-acetylglucosaminyltransferase 2 (397 aa).

The Cytoplasmic segment spans residues 1–7; that stretch reads MSVGRRR. The helical; Signal-anchor for type II membrane protein transmembrane segment at 8-28 threads the bilayer; sequence VKLLGILMMANVFIYLIVEVS. At 29 to 325 the chain is on the lumenal side; the sequence is KNSSQDKNGK…ALRLYSATSR (297 aa). N-linked (GlcNAc...) asparagine glycans are attached at residues asparagine 30, asparagine 79, asparagine 89, asparagine 127, asparagine 173, and asparagine 219.

Belongs to the glycosyltransferase 31 family. In terms of assembly, interacts with B3GNT8; this interaction greatly increases B3GNT2 catalytic activity, independently of B3GNT8 enzymatic activity. Mn(2+) is required as a cofactor. Expressed in heart, brain, lung, kidney and testis and, to a lesser extent, in liver and skeletal muscle. No expression in spleen.

It is found in the golgi apparatus membrane. The catalysed reaction is a beta-D-galactosyl-(1-&gt;4)-N-acetyl-beta-D-glucosaminyl derivative + UDP-N-acetyl-alpha-D-glucosamine = an N-acetyl-beta-D-glucosaminyl-(1-&gt;3)-beta-D-galactosyl-(1-&gt;4)-N-acetyl-beta-D-glucosaminyl derivative + UDP + H(+). The protein operates within protein modification; protein glycosylation. Beta-1,3-N-acetylglucosaminyltransferase involved in the synthesis of poly-N-acetyllactosamine. Catalyzes the initiation and elongation of poly-N-acetyllactosamine chains. Probably constitutes the main polylactosamine synthase. The polypeptide is N-acetyllactosaminide beta-1,3-N-acetylglucosaminyltransferase 2 (B3GNT2) (Mus musculus (Mouse)).